The following is a 478-amino-acid chain: Cytochrome c-552 (478 aa).

The first 26 residues, 1–26, serve as a signal peptide directing secretion; sequence MARKTLRARRFFSLIFPFFFITSVYA. His-94 is a heme c binding site. Heme contacts are provided by Cys-122, Cys-125, and Lys-126. The heme c site is built by Cys-160, Cys-163, His-164, Cys-209, Cys-212, and His-213. Residues Glu-215, Tyr-216, Lys-261, and Gln-263 each contribute to the Ca(2+) site. Tyr-216 contributes to the substrate binding site. Residue His-264 participates in substrate binding. 9 residues coordinate heme c: His-275, Cys-282, Cys-285, His-286, His-301, Cys-314, Cys-317, His-318, and His-393.

This sequence belongs to the cytochrome c-552 family. The cofactor is Ca(2+). Heme c serves as cofactor.

It is found in the periplasm. The catalysed reaction is 6 Fe(III)-[cytochrome c] + NH4(+) + 2 H2O = 6 Fe(II)-[cytochrome c] + nitrite + 8 H(+). It participates in nitrogen metabolism; nitrate reduction (assimilation). In terms of biological role, catalyzes the reduction of nitrite to ammonia, consuming six electrons in the process. In Salmonella dublin (strain CT_02021853), this protein is Cytochrome c-552.